Here is a 141-residue protein sequence, read N- to C-terminus: Hemoglobin subunit alpha-D (141 aa).

The 141-residue stretch at 1-141 (MLTAEDKKLI…VAAVLAEKYR (141 aa)) folds into the Globin domain. Heme b is bound by residues His-58 and His-87.

The protein belongs to the globin family. Heterotetramer of two alpha-D chains and two beta chains. Red blood cells.

In terms of biological role, involved in oxygen transport from the lung to the various peripheral tissues. This Apus apus (Common swift) protein is Hemoglobin subunit alpha-D (HBAD).